Consider the following 419-residue polypeptide: Probable G-protein coupled receptor 63 (419 aa).

Over 1-81 the chain is Extracellular; that stretch reads MVFSAVLTAF…AFKSLNLPLQ (81 aa). Residues Asn16, Asn28, and Asn62 are each glycosylated (N-linked (GlcNAc...) asparagine). A helical membrane pass occupies residues 82-104; sequence ITLSAIMIFILFVSFLGNLVVCL. The Cytoplasmic portion of the chain corresponds to 105–115; that stretch reads MVYQKAAMRSA. A helical membrane pass occupies residues 116-138; sequence INILLASLAFADMLLAVLNMPFA. The Extracellular segment spans residues 139–157; that stretch reads LVTILTTRWIFGKFFCRVS. Residues 158-177 traverse the membrane as a helical segment; the sequence is AMFFWLFVIEGVAILLIISI. Residues 178–196 are Cytoplasmic-facing; it reads DRFLIIVQRQDKLNPYRAK. Residues 197–216 traverse the membrane as a helical segment; that stretch reads VLIAVSWATSFCVAFPLAVG. The Extracellular portion of the chain corresponds to 217 to 240; sequence NPDLQIPSRAPQCVFGYTTNPGYQ. A helical transmembrane segment spans residues 241–263; the sequence is AYVILISLISFFIPFLVILYSFM. Topologically, residues 264–315 are cytoplasmic; it reads GILNTLRHNALRIHSYPEGICLSQASKLGLMSLQRPFQMSIDMGFKTRAFTT. The chain crosses the membrane as a helical span at residues 316–338; the sequence is ILILFAVFIVCWAPFTTYSLVAT. The Extracellular portion of the chain corresponds to 339 to 352; sequence FSKHFYYQHNFFEI. Residues 353–375 form a helical membrane-spanning segment; that stretch reads STWLLWLCYLKSALNPLIYYWRI. At 376–419 the chain is on the cytoplasmic side; the sequence is KKFHDACLDMMPKSFKFLPQLPGHTKRRIRPSAVYVCGEHRTVV.

Belongs to the G-protein coupled receptor 1 family. Expressed in brain; detected in the frontal cortex, with lower levels in the thalamus, caudate, hypothalamus and midbrain.

It is found in the cell membrane. Its function is as follows. Orphan receptor. May play a role in brain function. This Homo sapiens (Human) protein is Probable G-protein coupled receptor 63 (GPR63).